The primary structure comprises 95 residues: Pyrimidine/purine nucleoside phosphorylase (95 aa).

This sequence belongs to the nucleoside phosphorylase PpnP family.

It catalyses the reaction a purine D-ribonucleoside + phosphate = a purine nucleobase + alpha-D-ribose 1-phosphate. It carries out the reaction adenosine + phosphate = alpha-D-ribose 1-phosphate + adenine. The catalysed reaction is cytidine + phosphate = cytosine + alpha-D-ribose 1-phosphate. The enzyme catalyses guanosine + phosphate = alpha-D-ribose 1-phosphate + guanine. It catalyses the reaction inosine + phosphate = alpha-D-ribose 1-phosphate + hypoxanthine. It carries out the reaction thymidine + phosphate = 2-deoxy-alpha-D-ribose 1-phosphate + thymine. The catalysed reaction is uridine + phosphate = alpha-D-ribose 1-phosphate + uracil. The enzyme catalyses xanthosine + phosphate = alpha-D-ribose 1-phosphate + xanthine. Functionally, catalyzes the phosphorolysis of diverse nucleosides, yielding D-ribose 1-phosphate and the respective free bases. Can use uridine, adenosine, guanosine, cytidine, thymidine, inosine and xanthosine as substrates. Also catalyzes the reverse reactions. This Edwardsiella ictaluri (strain 93-146) protein is Pyrimidine/purine nucleoside phosphorylase.